A 156-amino-acid polypeptide reads, in one-letter code: Arginine repressor (156 aa).

It belongs to the ArgR family.

The protein resides in the cytoplasm. Its pathway is amino-acid biosynthesis; L-arginine biosynthesis [regulation]. Regulates arginine biosynthesis genes. This Escherichia fergusonii (strain ATCC 35469 / DSM 13698 / CCUG 18766 / IAM 14443 / JCM 21226 / LMG 7866 / NBRC 102419 / NCTC 12128 / CDC 0568-73) protein is Arginine repressor.